The chain runs to 181 residues: Protein CENTRORADIALIS (181 aa).

The protein belongs to the phosphatidylethanolamine-binding protein family. As to quaternary structure, may form homodimers in solution.

It localises to the cytoplasm. Expression of CEN leads to a morphological switch between shoot growth and the development of flower structures (inflorescence). May form complexes with phosphorylated ligands by interfering with kinases and their effectors. The protein is Protein CENTRORADIALIS (CEN) of Antirrhinum majus (Garden snapdragon).